We begin with the raw amino-acid sequence, 971 residues long: Exportin-2 (971 aa).

Met-1 is subject to N-acetylmethionine. The Importin N-terminal domain occupies 29–102; that stretch reads AEKFLESVEG…KANIVHLMLS (74 aa). Residue Ser-112 is modified to Phosphoserine. Lys-574 and Lys-824 each carry N6-acetyllysine. Phosphoserine is present on Ser-931.

This sequence belongs to the XPO2/CSE1 family. In terms of assembly, found in a complex with CSE1L/XPO2, Ran and KPNA2. Binds with high affinity to importin-alpha only in the presence of RanGTP. The complex is dissociated by the combined action of RanBP1 and RanGAP1. Interacts with CFTR.

The protein localises to the cytoplasm. Its subcellular location is the nucleus. Functionally, export receptor for importin-alpha. Mediates importin-alpha re-export from the nucleus to the cytoplasm after import substrates (cargos) have been released into the nucleoplasm. In the nucleus binds cooperatively to importin-alpha and to the GTPase Ran in its active GTP-bound form. Docking of this trimeric complex to the nuclear pore complex (NPC) is mediated through binding to nucleoporins. Upon transit of a nuclear export complex into the cytoplasm, disassembling of the complex and hydrolysis of Ran-GTP to Ran-GDP (induced by RANBP1 and RANGAP1, respectively) cause release of the importin-alpha from the export receptor. CSE1L/XPO2 then return to the nuclear compartment and mediate another round of transport. The directionality of nuclear export is thought to be conferred by an asymmetric distribution of the GTP- and GDP-bound forms of Ran between the cytoplasm and nucleus. This is Exportin-2 (CSE1L) from Bos taurus (Bovine).